Reading from the N-terminus, the 506-residue chain is NADH-quinone oxidoreductase subunit N 2 (506 aa).

The next 14 helical transmembrane spans lie at 11 to 31 (SLAYFAPELVLIAAALLLVVW), 44 to 64 (LVILSLAALACSGGLGAYFLA), 82 to 102 (FSNLFRVIFALVTGAIVLFLV), 117 to 137 (SGELFTLILVLSLGMNLMAAS), 140 to 160 (LLLIYLSLELVSVISFVLAGF), 175 to 195 (VIFGGVASGIMLYGMSWIFGI), 222 to 242 (VFVGTAFMLAGFGYKISAAPF), 254 to 274 (PTPVTAFLSVGPKAAGFAVLI), 289 to 309 (GVATPWPVLFGCLAMATMTVG), 323 to 345 (LAYSSIAHAGYMLLGFSVFSGAG), 356 to 376 (YCFMNLGAFMVVMAVAEESGG), 394 to 414 (AAAMAVFLVSLTGLPPTAGFI), 419 to 439 (LFSALLAAGGAWSWVIAVVGV), and 472 to 492 (LLGGTACALAIPTVLLGVYWG).

This sequence belongs to the complex I subunit 2 family. NDH-1 is composed of 14 different subunits. Subunits NuoA, H, J, K, L, M, N constitute the membrane sector of the complex.

It is found in the cell inner membrane. The catalysed reaction is a quinone + NADH + 5 H(+)(in) = a quinol + NAD(+) + 4 H(+)(out). Its function is as follows. NDH-1 shuttles electrons from NADH, via FMN and iron-sulfur (Fe-S) centers, to quinones in the respiratory chain. The immediate electron acceptor for the enzyme in this species is believed to be ubiquinone. Couples the redox reaction to proton translocation (for every two electrons transferred, four hydrogen ions are translocated across the cytoplasmic membrane), and thus conserves the redox energy in a proton gradient. This is NADH-quinone oxidoreductase subunit N 2 from Sorangium cellulosum (strain So ce56) (Polyangium cellulosum (strain So ce56)).